The sequence spans 259 residues: MSENALLALQRHFEDQFGHIEGLQPVSAKPSETAFNSDASEKEQSPTTSNEEEDAISDMEDKEDVSFGSKILRVSHQEVEKPTLSATVGRVSFLKKMPKLEDEEEILAKKREEQKLRKRSRQNDDGSDDDEVENLKNDLELQKLLRESHLLHEATSRTGQVQLVAEGKIRHKVVQQHIAQLGGKKETEKMPMAARRGMKKKQKHIEKVIENEARESGTVLAKKRKERKQFKKGFRPVTFSAPGKLVGGTLLLPKSMIPK.

Disordered regions lie at residues 22 to 68 (GLQP…VSFG), 111 to 133 (REEQKLRKRSRQNDDGSDDDEVE), and 181 to 202 (LGGKKETEKMPMAARRGMKKKQ). Positions 50 to 63 (NEEEDAISDMEDKE) are enriched in acidic residues. Phosphoserine is present on serine 127.

This is an uncharacterized protein from Schizosaccharomyces pombe (strain 972 / ATCC 24843) (Fission yeast).